A 636-amino-acid polypeptide reads, in one-letter code: uncharacterized protein (636 aa).

2 disordered regions span residues 1 to 22 and 81 to 107; these read MYNV…NEIG and SSQT…PQNN. Topologically, residues 1 to 170 are cytoplasmic; the sequence is MYNVRGDLNR…YFVGGEGLMQ (170 aa). Residues 171 to 191 traverse the membrane as a helical; Signal-anchor for type II membrane protein segment; that stretch reads LLFLLFLAAGTGMLFIGLPIL. The Lumenal segment spans residues 192–636; it reads TYTGHNSLAS…RPKNSLMDGC (445 aa). The 370-residue stretch at 218–587 folds into the GH16 domain; sequence LRYGSLIDPD…YVRIYQDSSD (370 aa). N-linked (GlcNAc...) asparagine glycosylation is found at asparagine 291, asparagine 378, asparagine 429, asparagine 464, asparagine 489, and asparagine 616.

Belongs to the SKN1/KRE6 family.

It is found in the endoplasmic reticulum membrane. In terms of biological role, required for synthesis of the major beta-glucans of the yeast cell wall. This is an uncharacterized protein from Schizosaccharomyces pombe (strain 972 / ATCC 24843) (Fission yeast).